Consider the following 452-residue polypeptide: Rhodopsin (452 aa).

Residues M1–V33 lie on the Extracellular side of the membrane. N-linked (GlcNAc...) asparagine glycosylation is present at N8. A helical transmembrane segment spans residues Y34–L58. Topologically, residues F59 to N70 are cytoplasmic. Residues M71 to F97 traverse the membrane as a helical segment. Residues M98–K109 lie on the Extracellular side of the membrane. The cysteines at positions 108 and 186 are disulfide-linked. The helical transmembrane segment at V110–I131 threads the bilayer. The 'Ionic lock' involved in activated form stabilization signature appears at D132–Y134. Topologically, residues D132–K151 are cytoplasmic. Residues A152–F172 form a helical membrane-spanning segment. The Extracellular segment spans residues G173–S199. The helical transmembrane segment at N200–V224 threads the bilayer. At M225–K261 the chain is on the cytoplasmic side. Residues I262–L283 traverse the membrane as a helical segment. The Extracellular segment spans residues A284 to T293. Residues P294–Y315 traverse the membrane as a helical segment. K305 is modified (N6-(retinylidene)lysine). Over S316–A452 the chain is Cytoplasmic. S-palmitoyl cysteine attachment occurs at residues C336 and C337. Disordered stretches follow at residues D346 to A365 and M376 to A452. The span at M376–P388 shows a compositional bias: low complexity. The segment covering A389–A440 has biased composition (pro residues).

The protein belongs to the G-protein coupled receptor 1 family. Opsin subfamily. Contains one covalently linked retinal chromophore. Upon light absorption, the covalently bound 11-cis-retinal is converted to all-trans-retinal. After hydrolysis of the Schiff base and release of the covalently bound all-trans-retinal, active rhodopsin is regenerated by binding of a fresh molecule of 11-cis-retinal.

It localises to the cell projection. The protein localises to the rhabdomere membrane. Photoreceptor required for image-forming vision at low light intensity. Light-induced isomerization of 11-cis to all-trans retinal triggers a conformational change that activates signaling via G-proteins. Signaling mediates the activation of phospholipase C. Subsequent receptor phosphorylation mediates displacement of the bound G-protein alpha subunit by arrestin and terminates signaling. The chain is Rhodopsin (RHO) from Loligo forbesii (Veined squid).